Here is a 198-residue protein sequence, read N- to C-terminus: dTTP/UTP pyrophosphatase (198 aa).

Catalysis depends on aspartate 76, which acts as the Proton acceptor.

The protein belongs to the Maf family. YhdE subfamily. A divalent metal cation serves as cofactor.

The protein resides in the cytoplasm. The enzyme catalyses dTTP + H2O = dTMP + diphosphate + H(+). It catalyses the reaction UTP + H2O = UMP + diphosphate + H(+). Functionally, nucleoside triphosphate pyrophosphatase that hydrolyzes dTTP and UTP. May have a dual role in cell division arrest and in preventing the incorporation of modified nucleotides into cellular nucleic acids. This Shewanella denitrificans (strain OS217 / ATCC BAA-1090 / DSM 15013) protein is dTTP/UTP pyrophosphatase.